The sequence spans 105 residues: Integration host factor subunit alpha (105 aa).

It belongs to the bacterial histone-like protein family. In terms of assembly, heterodimer of an alpha and a beta chain.

This protein is one of the two subunits of integration host factor, a specific DNA-binding protein that functions in genetic recombination as well as in transcriptional and translational control. This chain is Integration host factor subunit alpha, found in Xanthobacter autotrophicus (strain ATCC BAA-1158 / Py2).